The following is a 906-amino-acid chain: Ankyrin repeat and MYND domain-containing protein 1 (906 aa).

MORN repeat units follow at residues 16-38 (YHGQ…DGSS), 39-59 (FTGT…TKTM), and 61-83 (FQGL…DGSQ). The ANK 1 repeat unit spans residues 282 to 311 (KGYTVLAAAAMHSHLDIVNLLLDFGADVNK). Polar residues predominate over residues 391 to 400 (SMQTPESSNM). Positions 391–411 (SMQTPESSNMLHKEEVSPVKT) are disordered. 6 ANK repeats span residues 479–508 (VRKM…DPNL), 511–540 (VPMQ…QTDI), 547–579 (QSLT…NVDA), 623–657 (GGRT…NPNV), 660–689 (SGHS…DPNL), and 701–732 (VVCD…DVLN). The Zn(2+) site is built by Cys-845, Cys-848, Cys-859, Cys-862, Cys-868, Cys-872, His-881, and Cys-885. Residues 845–885 (CYQCGRSIGVRLSPCPRCYGILTCSKYCKTKAWIEFHKKDC) form an MYND-type zinc finger.

In Mus musculus (Mouse), this protein is Ankyrin repeat and MYND domain-containing protein 1 (Ankmy1).